The sequence spans 212 residues: MAKITKLEVQKRNKERVNVFLDEDYAFSISAELIYKEGIKVKDSVDSEKLKVLANKDAIIKCREAAIKSIERNLKTEKQVRDKLNLKGYDEEAITKAIDFLKEYNFLDDKDYANKFVKDKLKCQGSNKIRYSLMQKGVSKDVIEEELSGIDKENEKENALVLAQKKVNNLRKTESDTYKISNKLYRFLLSKGYGYDIIKDVVKEAMNFEFYD.

This sequence belongs to the RecX family.

The protein localises to the cytoplasm. Its function is as follows. Modulates RecA activity. This Clostridium botulinum (strain Alaska E43 / Type E3) protein is Regulatory protein RecX.